The chain runs to 476 residues: MASGLEDPILERSFKGHKAAITSADFSPNCKQIATASWDTFLMLWSLKPHARAYRYVGHKDVVTSLQFSPQGNLLASASRDRTVRLWVLDRKGKSSEFKAHTAPVRSVDFSADGQLLVTASEDKSIKVWSMFRQRFLYSLYRHTHWVRCAKFSPDGRLIVSCSEDKTIKIWDTTNKQCVNNFSDSVGFANFVDFNPNGTCIASAGSDHAVKIWDIRMNKLLQHYQVHSCGVNCLSFHPLGNSLVTASSDGTVKMLDLIEGRLIYTLQGHTGPVFTVSFSKDGELLTSGGADAQVLIWRTNFIHLHCKDPKRNLKRLHFEASPHLLDIYPRSPHSHEDRKETIEINPKREVMDLQSSSPPVVDVLSFDSTTMTDSTYRAVPGKGEDICRYFLNPLLMPECSSTTVKKRPEDVSDVPSESLRSVPLAVADALEHIMEQLNILTQTVSILEQRLSLTEDKLRDCLENQQKLFSAVQQKS.

7 WD repeats span residues 16–55 (GHKA…RAYR), 58–97 (GHKD…KSSE), 100–139 (AHTA…FLYS), 142–181 (RHTH…CVNN), 183–223 (SDSV…LLQH), 226–265 (VHSC…LIYT), and 268–307 (GHTG…LHCK). A coiled-coil region spans residues 429–468 (ALEHIMEQLNILTQTVSILEQRLSLTEDKLRDCLENQQKL).

Belongs to the WD repeat POC1 family. In terms of assembly, interacts with POC1A. Interacts with FAM161A. Interacts with CEP44; the interaction is direct and recruits POC1B to centriolar microtubules. Forms a microtubule-associated complex with POC5, CETN2 and FAM161A. Interacts with CCDC15. In terms of processing, phosphorylated in mitotic cells that may be mediated by CDK1. In terms of tissue distribution, expressed in the retina.

It localises to the cytoplasm. The protein localises to the cytoskeleton. Its subcellular location is the microtubule organizing center. The protein resides in the centrosome. It is found in the centriole. It localises to the cilium basal body. The protein localises to the spindle pole. In terms of biological role, plays an important role in centriole assembly and/or stability and ciliogenesis. Involved in early steps of centriole duplication, as well as in the later steps of centriole length control. Acts in concert with POC1A to ensure centriole integrity and proper mitotic spindle formation. Required for primary cilia formation, ciliary length and also cell proliferation. Required for retinal integrity. Acts as a positive regulator of centriole elongation. This is POC1 centriolar protein homolog B (Poc1b) from Mus musculus (Mouse).